Here is a 383-residue protein sequence, read N- to C-terminus: Putative glutamate--cysteine ligase 2-2 (383 aa).

It belongs to the glutamate--cysteine ligase type 2 family. YbdK subfamily.

The enzyme catalyses L-cysteine + L-glutamate + ATP = gamma-L-glutamyl-L-cysteine + ADP + phosphate + H(+). In terms of biological role, ATP-dependent carboxylate-amine ligase which exhibits weak glutamate--cysteine ligase activity. This Paenarthrobacter aurescens (strain TC1) protein is Putative glutamate--cysteine ligase 2-2.